The following is a 556-amino-acid chain: Formate--tetrahydrofolate ligase 1 (556 aa).

65–72 (TPAGEGKS) serves as a coordination point for ATP.

This sequence belongs to the formate--tetrahydrofolate ligase family.

The enzyme catalyses (6S)-5,6,7,8-tetrahydrofolate + formate + ATP = (6R)-10-formyltetrahydrofolate + ADP + phosphate. Its pathway is one-carbon metabolism; tetrahydrofolate interconversion. The chain is Formate--tetrahydrofolate ligase 1 from Streptococcus pyogenes serotype M18 (strain MGAS8232).